A 622-amino-acid chain; its full sequence is Low affinity potassium transport system protein Kup (622 aa).

Helical transmembrane passes span 9 to 29 (LPAITLAAIGVVYGDIGTSPL), 49 to 69 (VFGFLSLIFWLLIFVVSIKYL), 103 to 123 (VIMGLIGGSFFYGEVVITPAI), 137 to 157 (PQLDTWIVPLSIIVLTLLFMI), 165 to 185 (VGKLFAPIMLTWFLILAGLGL), 213 to 233 (VSFIALGAVVLSITGGEVLYA), 247 to 267 (WFTVVLPSLTLNYFGQGALLL), 276 to 296 (PFFLLAPDWALIPLLIIAALA), 337 to 357 (IYIPFVNWMLYVAVVIVIVSF), 363 to 383 (LAAAYGIAVTGTMVLTSILST), 396 to 416 (FVALILIAFLCVDIPLFTANL), and 419 to 439 (LLSGGWLPLSLGTVMFIVMTT).

Belongs to the HAK/KUP transporter (TC 2.A.72) family.

The protein localises to the cell inner membrane. It carries out the reaction K(+)(in) + H(+)(in) = K(+)(out) + H(+)(out). In terms of biological role, responsible for the low-affinity transport of potassium into the cell. Likely operates as a K(+):H(+) symporter. The polypeptide is Low affinity potassium transport system protein Kup (Shigella flexneri).